We begin with the raw amino-acid sequence, 621 residues long: Amino-acid acetyltransferase, mitochondrial (621 aa).

A mitochondrion-targeting transit peptide spans 1–77; that stretch reads MIPRAPPSTQ…RSYLASFGVQ (77 aa). The tract at residues 213–233 is disordered; it reads PKPGSEEESEPGFSPPETHIY. One can recognise an N-acetyltransferase domain in the interval 424–600; sequence LPIRVVRSVS…GSAGLSFIED (177 aa).

Belongs to the acetyltransferase family.

It is found in the mitochondrion. The enzyme catalyses L-glutamate + acetyl-CoA = N-acetyl-L-glutamate + CoA + H(+). The protein operates within amino-acid biosynthesis; L-arginine biosynthesis; N(2)-acetyl-L-ornithine from L-glutamate: step 1/4. In terms of biological role, N-acetylglutamate synthase involved in arginine biosynthesis. This chain is Amino-acid acetyltransferase, mitochondrial (ARG2), found in Coprinopsis cinerea (strain Okayama-7 / 130 / ATCC MYA-4618 / FGSC 9003) (Inky cap fungus).